The sequence spans 179 residues: Phosphopantetheine adenylyltransferase (179 aa).

A substrate-binding site is contributed by serine 23. ATP contacts are provided by residues 23 to 24 (SF) and histidine 31. Residues lysine 55, alanine 87, and arginine 101 each coordinate substrate. Residues 102-104 (GIR), glutamate 112, and 137-143 (FAHVSSS) each bind ATP.

Belongs to the bacterial CoaD family. As to quaternary structure, homohexamer. Mg(2+) is required as a cofactor.

Its subcellular location is the cytoplasm. The enzyme catalyses (R)-4'-phosphopantetheine + ATP + H(+) = 3'-dephospho-CoA + diphosphate. It participates in cofactor biosynthesis; coenzyme A biosynthesis; CoA from (R)-pantothenate: step 4/5. Reversibly transfers an adenylyl group from ATP to 4'-phosphopantetheine, yielding dephospho-CoA (dPCoA) and pyrophosphate. The protein is Phosphopantetheine adenylyltransferase of Rhodopirellula baltica (strain DSM 10527 / NCIMB 13988 / SH1).